Reading from the N-terminus, the 223-residue chain is MSLANIIDHTALKPHTQKADILKLIEEAKTYKFASVCVNPTWVELAAKELKGTGVDVCTVIGFPLGANTTETKAFETKDAISKGATEVDMVINIAALKDKEDDVVEADIRGVVEAVAGKALVKVIIETCLLTDEEKERACRLAVSAGADFVKTSTGFSTGGATKEDIALMRKTVGPDIGVKASGGVRTKEDVDTMVEAGASRIGASAGVSIVKGENASGGDNY.

The Proton donor/acceptor role is filled by Asp89. Lys152 serves as the catalytic Schiff-base intermediate with acetaldehyde. The active-site Proton donor/acceptor is Lys181.

This sequence belongs to the DeoC/FbaB aldolase family. DeoC type 1 subfamily.

Its subcellular location is the cytoplasm. It catalyses the reaction 2-deoxy-D-ribose 5-phosphate = D-glyceraldehyde 3-phosphate + acetaldehyde. The protein operates within carbohydrate degradation; 2-deoxy-D-ribose 1-phosphate degradation; D-glyceraldehyde 3-phosphate and acetaldehyde from 2-deoxy-alpha-D-ribose 1-phosphate: step 2/2. Its function is as follows. Catalyzes a reversible aldol reaction between acetaldehyde and D-glyceraldehyde 3-phosphate to generate 2-deoxy-D-ribose 5-phosphate. The chain is Deoxyribose-phosphate aldolase from Bacillus subtilis (strain 168).